Here is a 397-residue protein sequence, read N- to C-terminus: Purine ribonucleoside efflux pump NepI (397 aa).

At 1-21 (MNENIAEKFRADGVARPNWSA) the chain is on the cytoplasmic side. The helical transmembrane segment at 22–42 (VFAVAFCVACLITVEFLPVSL) threads the bilayer. Residues 43-54 (LTPMAQDLGISE) are Periplasmic-facing. The chain crosses the membrane as a helical span at residues 55 to 75 (GVAGQSVTVTAFVAMFSSLFI). The Cytoplasmic segment spans residues 76–85 (TQIIQATDRR). The helical transmembrane segment at 86–106 (YIVILFAVLLTASCLMVSFAN) threads the bilayer. Residue serine 107 is a topological domain, periplasmic. A helical membrane pass occupies residues 108-128 (FTLLLLGRACLGLALGGFWAM). Residues 129-147 (SASLTMRLVPARTVPKALS) lie on the Cytoplasmic side of the membrane. Residues 148–168 (VIFGAVSIALVIAAPLGSFLG) traverse the membrane as a helical segment. Over 169–175 (GIIGWRN) the chain is Periplasmic. A helical membrane pass occupies residues 176-196 (VFNAAAVMGVLCVIWVVKSLP). At 197–215 (SLPGEPSHQKQNMFSLLQR) the chain is on the cytoplasmic side. The helical transmembrane segment at 216 to 236 (PGVMAGMIAIFMSFAGQFAFF) threads the bilayer. Residues 237-255 (TYIRPVYMNLAGFDVDGLT) are Periplasmic-facing. Residues 256–276 (LVLLSFGIASFVGTSFSSYVL) traverse the membrane as a helical segment. The Cytoplasmic portion of the chain corresponds to 277–281 (KRSVK). Residues 282-302 (LALAGAPLLLALSALTLIVWG) form a helical membrane-spanning segment. Over 303–305 (SDK) the chain is Periplasmic. A helical membrane pass occupies residues 306-326 (TVAAVIAIIWGLAFALVPVGW). The Cytoplasmic segment spans residues 327–343 (STWITRSLADQAEKAGS). The helical transmembrane segment at 344–364 (IQVAVIQLANTCGAAVGGYAL) threads the bilayer. Topologically, residues 365–366 (DN) are periplasmic. The chain crosses the membrane as a helical span at residues 367 to 387 (FGLLSPLALSGGLMLLTALVV). The Cytoplasmic portion of the chain corresponds to 388 to 397 (AAKVRITPMS).

This sequence belongs to the major facilitator superfamily. DHA1 family. NepI (TC 2.A.1.2.26) subfamily.

Its subcellular location is the cell inner membrane. It carries out the reaction inosine(in) + H(+)(out) = inosine(out) + H(+)(in). The enzyme catalyses guanosine(in) + H(+)(out) = guanosine(out) + H(+)(in). In terms of biological role, involved in the efflux of purine ribonucleosides, such as inosine and guanosine. The protein is Purine ribonucleoside efflux pump NepI of Salmonella paratyphi B (strain ATCC BAA-1250 / SPB7).